The chain runs to 147 residues: MTASSSGCGGLPVSQCPSYSSLSKLFFMDSSYDSYYCEEPEERQTASIRERKRMCSINVAFIELRNYIPTFPYEKRLSKIDTLNLAIAYINMLDDVLRTPEDSGQYIQKCVHMARTGQIGAPAWSTSDLLARLNWIKWRRLGIEPIA.

One can recognise a bHLH domain in the interval 41 to 93; it reads EERQTASIRERKRMCSINVAFIELRNYIPTFPYEKRLSKIDTLNLAIAYINML.

As to expression, expressed in hermaphrodite dopaminergic neurons (ADE, CEP, and PDE).

Its subcellular location is the nucleus. It localises to the cytoplasm. Functionally, transcriptional activator. Shown to have a role in the negative regulation of exit from L1 arrest and dauer diapause dependent on IIS signaling (insulin and insulin-like growth factor (IGF) signaling). Hypodermal expression is regulated by IIS/daf-16 while neuronal expression is not under the control of IIS/daf-16. The sequence is that of Helix-loop-helix protein 13 from Caenorhabditis elegans.